Here is a 556-residue protein sequence, read N- to C-terminus: HIRA-interacting protein 3 (556 aa).

Serine 27 is modified (phosphoserine). Residues 64–77 (DEAASREDKLDLTK) show a composition bias toward basic and acidic residues. Residues 64-426 (DEAASREDKL…GRRGEDHPAV (363 aa)) form a disordered region. Threonine 84 carries the phosphothreonine modification. 8 positions are modified to phosphoserine: serine 87, serine 98, serine 100, serine 125, serine 142, serine 143, serine 159, and serine 160. Positions 99-108 (ESESGSEASS) are enriched in low complexity. Positions 126–158 (PAKEENPRRASKAVEESSDEERQRDLPAQRGEE) are enriched in basic and acidic residues. Basic residues predominate over residues 168–177 (KGKTRKKPVV). Serine 196, serine 199, serine 223, and serine 227 each carry phosphoserine. Over residues 209–224 (KKVEGNKGTKSLKESE) the composition is skewed to basic and acidic residues. Over residues 240–254 (EEEVEEEEKEEDEEK) the composition is skewed to acidic residues. Residues 260–269 (RTRSNGRRKS) show a composition bias toward basic residues. 2 positions are modified to phosphoserine: serine 289 and serine 291. Over residues 304 to 322 (DSGRDREPPVQRKSEDRTQ) the composition is skewed to basic and acidic residues. Serine 330, serine 332, serine 333, and serine 357 each carry phosphoserine. Threonine 358 carries the post-translational modification Phosphothreonine. Residues serine 359, serine 363, serine 370, and serine 372 each carry the phosphoserine modification. Over residues 385 to 396 (RSSKKSSRKGRT) the composition is skewed to basic residues. Residues 403-527 (SDGSPEAKGG…APPGELYRRT (125 aa)) are interaction with the histone H2A-H2B complex. Threonine 471 carries the post-translational modification Phosphothreonine. The tract at residues 502-556 (SGRPRRRTAWNPLGEAAPPGELYRRTLDSDEERPRPAPPDWSHMRGIISSDGESN) is disordered. Positions 523-536 (LYRRTLDSDEERPR) are enriched in basic and acidic residues. Phosphoserine occurs at positions 530, 550, 551, and 555.

Interacts (via C-terminus) with histone H2A-H2B dimers; the interaction is direct. Interacts with HIRA. Interacts with CK2. Phosphorylated by CK2. In terms of tissue distribution, widely expressed. Isoform 1 is predominant in skeletal muscle. Isoform 2 is predominant in liver and heart.

It is found in the nucleus. In terms of biological role, histone chaperone that carries a H2A-H2B histone complex and facilitates its deposition onto chromatin. The sequence is that of HIRA-interacting protein 3 (HIRIP3) from Homo sapiens (Human).